A 158-amino-acid chain; its full sequence is Flagellar assembly factor FliW (158 aa).

It belongs to the FliW family. Interacts with translational regulator CsrA and flagellin(s).

The protein resides in the cytoplasm. Functionally, acts as an anti-CsrA protein, binds CsrA and prevents it from repressing translation of its target genes, one of which is flagellin. Binds to flagellin and participates in the assembly of the flagellum. The sequence is that of Flagellar assembly factor FliW from Moorella thermoacetica (strain ATCC 39073 / JCM 9320).